Reading from the N-terminus, the 528-residue chain is 2-isopropylmalate synthase (528 aa).

The 268-residue stretch at I12–V279 folds into the Pyruvate carboxyltransferase domain. Mn(2+)-binding residues include D21, H214, H216, and N250. Positions R401–A528 are regulatory domain.

Belongs to the alpha-IPM synthase/homocitrate synthase family. LeuA type 1 subfamily. As to quaternary structure, homodimer. Mn(2+) serves as cofactor.

Its subcellular location is the cytoplasm. The enzyme catalyses 3-methyl-2-oxobutanoate + acetyl-CoA + H2O = (2S)-2-isopropylmalate + CoA + H(+). It functions in the pathway amino-acid biosynthesis; L-leucine biosynthesis; L-leucine from 3-methyl-2-oxobutanoate: step 1/4. In terms of biological role, catalyzes the condensation of the acetyl group of acetyl-CoA with 3-methyl-2-oxobutanoate (2-ketoisovalerate) to form 3-carboxy-3-hydroxy-4-methylpentanoate (2-isopropylmalate). This chain is 2-isopropylmalate synthase, found in Stenotrophomonas maltophilia (strain K279a).